Consider the following 754-residue polypeptide: Gelsolin, cytoplasmic (754 aa).

The tract at residues 1-120 (MVPAFEGAGA…RYLKGGVASG (120 aa)) is actin-severing. The stretch at 22-71 (FEVVPYPKEKYGQFYQGDSYIVLYTRDVNGNLSWDLHFWLGSETSQDEAG) is one Gelsolin-like 1 repeat. The interval 68-71 (DEAG) is actin-actin interfilament contact point. A 1,2-diacyl-sn-glycero-3-phospho-(1D-myo-inositol-4,5-bisphosphate) contacts are provided by residues 101–108 (LFLSRFKK) and 133–141 (RLFHVKGRR). The Gelsolin-like 2 repeat unit spans residues 143–183 (IRIRQVEVGVGSMNKGDCFILDCGSQVYAYMGPSSRKMDRL). A disordered region spans residues 209 to 238 (TASGSEAGESSPGLGGGSPDDVADEDTGVD). Residues 210-220 (ASGSEAGESSP) are compositionally biased toward low complexity. Gelsolin-like repeat units lie at residues 266-306 (NMIG…KEKV), 414-463 (LKLE…DEKA), 538-580 (FDTR…EEKA), and 643-684 (LRVN…QEKE). The interval 386 to 751 (LLQKNAGPAF…MKAQVPETNA (366 aa)) is actin-binding, Ca-sensitive. Residues Gly430, Asp431, Glu461, Asp556, Glu578, Asp659, Asp660, and Glu682 each contribute to the Ca(2+) site.

Belongs to the villin/gelsolin family. In terms of tissue distribution, tail muscle.

The protein localises to the cytoplasm. The protein resides in the cytoskeleton. In terms of biological role, calcium-regulated, actin-modulating protein that binds to the plus (or barbed) ends of actin monomers or filaments, preventing monomer exchange (end-blocking or capping). It can promote the assembly of monomers into filaments (nucleation) as well as sever filaments already formed. In Homarus americanus (American lobster), this protein is Gelsolin, cytoplasmic.